We begin with the raw amino-acid sequence, 222 residues long: C-reactive protein (222 aa).

The N-terminal stretch at 1–19 (MEKLSLCLLVIISLSNAFA) is a signal peptide. At glutamine 20 the chain carries Pyrrolidone carboxylic acid. In terms of domain architecture, Pentraxin (PTX) spans 24 to 222 (IGKAFVFPKE…EVYVKPQLWP (199 aa)). Cysteine 55 and cysteine 113 form a disulfide bridge. Residues asparagine 78, glutamate 154, glutamine 155, aspartate 156, and glutamine 166 each contribute to the Ca(2+) site.

The protein belongs to the pentraxin family. As to quaternary structure, homopentamer. Pentraxin (or pentaxin) have a discoid arrangement of 5 non-covalently bound subunits. Interacts with FCN1; may regulate monocyte activation by FCN1. Ca(2+) serves as cofactor. Found in plasma.

It is found in the secreted. Displays several functions associated with host defense: it promotes agglutination, bacterial capsular swelling, phagocytosis and complement fixation through its calcium-dependent binding to phosphorylcholine. Can interact with DNA and histones and may scavenge nuclear material released from damaged circulating cells. The polypeptide is C-reactive protein (CRP) (Sus scrofa (Pig)).